Here is a 463-residue protein sequence, read N- to C-terminus: Putative dipeptidase YtjP (463 aa).

Histidine 85 is a binding site for Zn(2+). Aspartate 87 is a catalytic residue. A Zn(2+)-binding site is contributed by aspartate 116. Glutamate 150 (proton acceptor) is an active-site residue. Glutamate 151, aspartate 174, and histidine 436 together coordinate Zn(2+).

Belongs to the peptidase M20A family. Zn(2+) is required as a cofactor.

This chain is Putative dipeptidase YtjP (ytjP), found in Bacillus subtilis (strain 168).